Consider the following 2226-residue polypeptide: Rotatin (2226 aa).

The tract at residues 295-346 (EARGPYHSPNPSPGSSSSRPSVVGRTGQRPRGDGQDWDAVSSSGSSSHTHVN) is disordered. The segment covering 307 to 319 (PGSSSSRPSVVGR) has biased composition (low complexity). S311 carries the post-translational modification Phosphoserine. The residue at position 813 (K813) is an N6-acetyllysine.

This sequence belongs to the rotatin family. As to quaternary structure, interacts with PPP1R35; this interaction allows the mutual recruitment to the centriole.

It localises to the cytoplasm. The protein localises to the cytoskeleton. It is found in the cilium basal body. Involved in the genetic cascade that governs left-right specification. Required for correct asymmetric expression of NODAL, LEFTY and PITX2. This is Rotatin from Mus musculus (Mouse).